We begin with the raw amino-acid sequence, 435 residues long: ATP-dependent protease ATPase subunit HslU (435 aa).

ATP contacts are provided by residues V18, 60 to 65 (GVGKTE), D248, E313, and R385.

This sequence belongs to the ClpX chaperone family. HslU subfamily. In terms of assembly, a double ring-shaped homohexamer of HslV is capped on each side by a ring-shaped HslU homohexamer. The assembly of the HslU/HslV complex is dependent on binding of ATP.

It localises to the cytoplasm. Functionally, ATPase subunit of a proteasome-like degradation complex; this subunit has chaperone activity. The binding of ATP and its subsequent hydrolysis by HslU are essential for unfolding of protein substrates subsequently hydrolyzed by HslV. HslU recognizes the N-terminal part of its protein substrates and unfolds these before they are guided to HslV for hydrolysis. The polypeptide is ATP-dependent protease ATPase subunit HslU (Azorhizobium caulinodans (strain ATCC 43989 / DSM 5975 / JCM 20966 / LMG 6465 / NBRC 14845 / NCIMB 13405 / ORS 571)).